The following is a 432-amino-acid chain: Trigger factor (432 aa).

In terms of domain architecture, PPIase FKBP-type spans 163 to 248 (GDVVVLDFAA…VHAVKERRLP (86 aa)).

Belongs to the FKBP-type PPIase family. Tig subfamily.

It is found in the cytoplasm. It catalyses the reaction [protein]-peptidylproline (omega=180) = [protein]-peptidylproline (omega=0). Involved in protein export. Acts as a chaperone by maintaining the newly synthesized protein in an open conformation. Functions as a peptidyl-prolyl cis-trans isomerase. In Nitratidesulfovibrio vulgaris (strain DSM 19637 / Miyazaki F) (Desulfovibrio vulgaris), this protein is Trigger factor.